The chain runs to 280 residues: Virginiamycin B lyase (280 aa).

Residue histidine 215 participates in substrate binding. Glutamate 254 is a Mg(2+) binding site. Histidine 256 functions as the Proton acceptor in the catalytic mechanism. Position 271 (glutamate 271) interacts with Mg(2+).

The protein belongs to the Vgb family. Monomer. Mg(2+) is required as a cofactor.

In terms of biological role, inactivates the type B streptogramin antibiotics by linearizing the lactone ring at the ester linkage, generating a free phenylglycine carboxylate and converting the threonyl moiety into 2-amino-butenoic acid. This chain is Virginiamycin B lyase, found in Mycobacterium sp. (strain KMS).